The chain runs to 274 residues: Large ribosomal subunit protein uL2cz/uL2cy (274 aa).

Positions 224 to 274 (NPVDHPHGGGEGRAPIGRKKPTTPWGYPALGRRSRKRNKYSDNLILRRRSK) are disordered.

Belongs to the universal ribosomal protein uL2 family. In terms of assembly, part of the 50S ribosomal subunit.

The protein localises to the plastid. Its subcellular location is the chloroplast. This Panax ginseng (Korean ginseng) protein is Large ribosomal subunit protein uL2cz/uL2cy (rpl2-A).